Consider the following 440-residue polypeptide: WAS/WASL-interacting protein family member 2 (440 aa).

Over residues 1 to 18 (MPIPPPPPPPPGPPPPPT) the composition is skewed to pro residues. The interval 1–36 (MPIPPPPPPPPGPPPPPTFHQANTEQPKLSRDEQRG) is disordered. Positions 36 to 53 (GRGALLQDICKGTKLKKV) constitute a WH2 domain. R37 is modified (asymmetric dimethylarginine). Residues 49–52 (KLKK) form a binds actin region. Disordered stretches follow at residues 56-387 (INDR…DSIT) and 419-440 (RIYP…PILR). Residues 116 to 133 (PSSRAAAPRPPVSAASGR) show a composition bias toward low complexity. A compositionally biased stretch (polar residues) spans 161–172 (RPNTTSSTGMKH). Composition is skewed to pro residues over residues 176–193 (APPP…PTPL), 222–236 (EGPP…PPSP), 249–262 (APPP…PGVP), and 356–378 (RGKP…PPPL).

Belongs to the verprolin family. As to quaternary structure, interacts with WASL and WASP, and this interaction results in cytoplasmic relocation of these two proteins along actin filaments. Interacts with NCK2 resulting in the localization to sites of focal adhesions. No interaction was seen with WASF2 and WASF3. In terms of tissue distribution, expressed mainly in brain, colon, lung and stomach (at protein level). Ubiquitously expressed, with high expression in brain, kidney, lung, and placenta.

Its subcellular location is the cytoplasm. The protein resides in the cytoskeleton. Plays an active role in the formation of cell surface protrusions downstream of activated PDGFB receptors. Plays an important role in actin-microspike formation through cooperation with WASL. May cooperate with WASP and WASL to induce mobilization and reorganization of the actin filament system. The protein is WAS/WASL-interacting protein family member 2 (WIPF2) of Homo sapiens (Human).